The sequence spans 143 residues: MESSGFLRWGKVFAAGGSIILTGVLLFKYTTPTDEQLLQALSPELRLQYERERNLRQAEQQELMKVVQQTMKSKDPIWKTGTVDSPWERNGTQATKDQFQRLKADQVQKEELERIRQELDKIRMESLDQTDMIVSKKSWWSLW.

Residues glycine 5–phenylalanine 27 traverse the membrane as a helical segment. Positions phenylalanine 99–aspartate 131 form a coiled coil.

Belongs to the CBP4 family.

Its subcellular location is the mitochondrion inner membrane. In terms of biological role, essential for the assembly of ubiquinol-cytochrome c reductase. It has a direct effect on the correct occurrence of the Rieske protein, core 4, core 5 and apocytochrome b. This is Assembly factor CBP4 (CBP4) from Kluyveromyces lactis (strain ATCC 8585 / CBS 2359 / DSM 70799 / NBRC 1267 / NRRL Y-1140 / WM37) (Yeast).